The chain runs to 345 residues: Anthranilate phosphoribosyltransferase (345 aa).

5-phospho-alpha-D-ribose 1-diphosphate contacts are provided by residues glycine 84, glycine 87–aspartate 88, threonine 92, asparagine 94–threonine 97, lysine 112–serine 120, and serine 124. An anthranilate-binding site is contributed by glycine 84. Serine 96 provides a ligand contact to Mg(2+). Asparagine 115 serves as a coordination point for anthranilate. Residue arginine 170 coordinates anthranilate. Mg(2+)-binding residues include aspartate 229 and glutamate 230.

This sequence belongs to the anthranilate phosphoribosyltransferase family. As to quaternary structure, homodimer. It depends on Mg(2+) as a cofactor.

It catalyses the reaction N-(5-phospho-beta-D-ribosyl)anthranilate + diphosphate = 5-phospho-alpha-D-ribose 1-diphosphate + anthranilate. It participates in amino-acid biosynthesis; L-tryptophan biosynthesis; L-tryptophan from chorismate: step 2/5. In terms of biological role, catalyzes the transfer of the phosphoribosyl group of 5-phosphorylribose-1-pyrophosphate (PRPP) to anthranilate to yield N-(5'-phosphoribosyl)-anthranilate (PRA). This Xanthomonas campestris pv. campestris (strain 8004) protein is Anthranilate phosphoribosyltransferase.